The chain runs to 239 residues: Ribose-5-phosphate isomerase A (239 aa).

Residues 40 to 43 (SGST), 96 to 99 (DGAD), and 110 to 113 (KGGG) contribute to the substrate site. Glutamate 119 serves as the catalytic Proton acceptor. Lysine 137 is a substrate binding site.

Belongs to the ribose 5-phosphate isomerase family. Homodimer.

It carries out the reaction aldehydo-D-ribose 5-phosphate = D-ribulose 5-phosphate. It functions in the pathway carbohydrate degradation; pentose phosphate pathway; D-ribose 5-phosphate from D-ribulose 5-phosphate (non-oxidative stage): step 1/1. In terms of biological role, catalyzes the reversible conversion of ribose-5-phosphate to ribulose 5-phosphate. This chain is Ribose-5-phosphate isomerase A, found in Methanococcus maripaludis (strain C5 / ATCC BAA-1333).